The chain runs to 256 residues: DNA repair protein RecO (256 aa).

This sequence belongs to the RecO family.

Functionally, involved in DNA repair and RecF pathway recombination. The polypeptide is DNA repair protein RecO (Streptococcus pneumoniae serotype 2 (strain D39 / NCTC 7466)).